The following is a 200-amino-acid chain: COMM domain-containing protein 7 (200 aa).

Residues 133-200 form the COMM domain; sequence QLIDMEWRFG…RVRASMECLS (68 aa).

This sequence belongs to the COMM domain-containing protein 7 family. As to quaternary structure, component of the commander complex consisting of the CCC subcomplex and the retriever subcomplex. Component of the CCC (COMMD/CCDC22/CCDC93) subcomplex consisting of COMMD1, COMMD2, COMMD3, COMMD4, COMMD5, COMMD6, COMMD7, COMMD8, COMMD9, COMMD10, CCDC22 and CCDC93; within the complex forms a heterodimer with COMMD9. Interacts with RELA. Interacts with CCDC22, CCDC93, SCNN1B, CUL7.

Its subcellular location is the cytoplasmic vesicle. Functionally, scaffold protein in the commander complex that is essential for endosomal recycling of transmembrane cargos; the commander complex is composed of the CCC subcomplex and the retriever subcomplex. May modulate activity of cullin-RING E3 ubiquitin ligase (CRL) complexes. Associates with the NF-kappa-B complex and suppresses its transcriptional activity. This is COMM domain-containing protein 7 (Commd7) from Mus musculus (Mouse).